The primary structure comprises 375 residues: tRNA-specific 2-thiouridylase MnmA (375 aa).

ATP contacts are provided by residues 12-19 and Met-38; that span reads GMSGGVDS. The interaction with target base in tRNA stretch occupies residues 98–100; the sequence is NPD. The Nucleophile role is filled by Cys-103. Cysteines 103 and 200 form a disulfide. Gly-127 contributes to the ATP binding site. Positions 150-152 are interaction with tRNA; the sequence is KDQ. Cys-200 serves as the catalytic Cysteine persulfide intermediate. Residues 312-313 are interaction with tRNA; it reads RY.

This sequence belongs to the MnmA/TRMU family.

The protein localises to the cytoplasm. It catalyses the reaction S-sulfanyl-L-cysteinyl-[protein] + uridine(34) in tRNA + AH2 + ATP = 2-thiouridine(34) in tRNA + L-cysteinyl-[protein] + A + AMP + diphosphate + H(+). Catalyzes the 2-thiolation of uridine at the wobble position (U34) of tRNA, leading to the formation of s(2)U34. This chain is tRNA-specific 2-thiouridylase MnmA, found in Lactobacillus helveticus (strain DPC 4571).